We begin with the raw amino-acid sequence, 436 residues long: Chaperone protein dnaJ 16 (436 aa).

The 66-residue stretch at 20-85 folds into the J domain; that stretch reads DPYEVLGVLR…EKRRQFDSAG (66 aa). A coiled-coil region spans residues 291–348; that stretch reads TQEKEDLRSVEAQILTKRAELAKFETEYREVLVQFTDMTSRYAQEMQSIDELLKQRNE. Residues 360 to 416 form a disordered region; sequence KRSSSKNRMRKSSFKKAAAKAPAPTEQEEEEEEEEEEEEESSRQKNKKPSTCDKSET. The segment covering 362–377 has biased composition (basic residues); sequence SSSKNRMRKSSFKKAA. A compositionally biased stretch (acidic residues) spans 385–399; the sequence is EQEEEEEEEEEEEEE.

It belongs to the DnaJ family. B/II subfamily. Expressed constitutively in seedlings, roots, leaves, stems, flowers and siliques.

The protein localises to the membrane. Its function is as follows. Plays a continuous role in plant development probably in the structural organization of compartments. Seems to not be involved in gravitropism signaling pathway. The protein is Chaperone protein dnaJ 16 (ATJ16) of Arabidopsis thaliana (Mouse-ear cress).